We begin with the raw amino-acid sequence, 227 residues long: PKHD-type hydroxylase Bxeno_B2194 (227 aa).

One can recognise a Fe2OG dioxygenase domain in the interval 78–178 (KVFPPLFNRY…RVASFFWIQS (101 aa)). Fe cation contacts are provided by H96, D98, and H159. R169 is a 2-oxoglutarate binding site.

Fe(2+) is required as a cofactor. It depends on L-ascorbate as a cofactor.

The sequence is that of PKHD-type hydroxylase Bxeno_B2194 from Paraburkholderia xenovorans (strain LB400).